The following is a 395-amino-acid chain: S-adenosylmethionine synthase (395 aa).

Histidine 14 is a binding site for ATP. Aspartate 16 provides a ligand contact to Mg(2+). Residue glutamate 42 participates in K(+) binding. L-methionine is bound by residues glutamate 55 and glutamine 98. A flexible loop region spans residues glutamine 98 to lysine 108. Residues aspartate 174–lysine 176, arginine 240–phenylalanine 241, aspartate 249, arginine 255–lysine 256, alanine 272, and lysine 276 contribute to the ATP site. Aspartate 249 is an L-methionine binding site. Lysine 280 provides a ligand contact to L-methionine.

This sequence belongs to the AdoMet synthase family. As to quaternary structure, homotetramer; dimer of dimers. It depends on Mg(2+) as a cofactor. K(+) serves as cofactor.

It is found in the cytoplasm. It catalyses the reaction L-methionine + ATP + H2O = S-adenosyl-L-methionine + phosphate + diphosphate. It functions in the pathway amino-acid biosynthesis; S-adenosyl-L-methionine biosynthesis; S-adenosyl-L-methionine from L-methionine: step 1/1. Functionally, catalyzes the formation of S-adenosylmethionine (AdoMet) from methionine and ATP. The overall synthetic reaction is composed of two sequential steps, AdoMet formation and the subsequent tripolyphosphate hydrolysis which occurs prior to release of AdoMet from the enzyme. This Caldanaerobacter subterraneus subsp. tengcongensis (strain DSM 15242 / JCM 11007 / NBRC 100824 / MB4) (Thermoanaerobacter tengcongensis) protein is S-adenosylmethionine synthase.